The primary structure comprises 221 residues: Ras-related protein Rab-27A (221 aa).

Residue Ser2 is modified to N-acetylserine. Ser2 carries the post-translational modification Phosphoserine. Residue 16-24 coordinates GTP; sequence GDSGVGKTS. Residues 38–46 carry the Effector region motif; sequence FITTVGIDF. GTP-binding positions include 74 to 78, 133 to 136, and 163 to 165; these read DTAGQ, NKSD, and SAA. Cys123 and Cys188 form a disulfide bridge. Residues 202–221 form a disordered region; it reads NGHTSADPLNEEKEKGSCGC. The span at 211–221 shows a compositional bias: basic and acidic residues; it reads NEEKEKGSCGC. S-geranylgeranyl cysteine attachment occurs at residues Cys219 and Cys221. Residue Cys221 is modified to Cysteine methyl ester.

It belongs to the small GTPase superfamily. Rab family. Binds SYTL1, SLAC2B, MYRIP, SYTL3, SYTL4 and SYTL5. Interacts with RPH3A and RPH3A. Binds MLPH and SYTL2. Interacts with UNC13D. Does not interact with the BLOC-3 complex (heterodimer of HPS1 and HPS4). Interacts (GDP-bound form preferentially) with DENND10.

It localises to the membrane. Its subcellular location is the melanosome. The protein resides in the late endosome. The protein localises to the lysosome. It catalyses the reaction GTP + H2O = GDP + phosphate + H(+). Regulated by guanine nucleotide exchange factors (GEFs) which promote the exchange of bound GDP for free GTP, GTPase activating proteins (GAPs) which increase the GTP hydrolysis activity, and GDP dissociation inhibitors which inhibit the dissociation of the nucleotide from the GTPase. Activated by GEFs such as DENND10. Its function is as follows. Small GTPase which cycles between active GTP-bound and inactive GDP-bound states. In its active state, binds to a variety of effector proteins to regulate homeostasis of late endocytic pathway, including endosomal positioning, maturation and secretion. Plays a role in cytotoxic granule exocytosis in lymphocytes. Required for both granule maturation and granule docking and priming at the immunologic synapse. This chain is Ras-related protein Rab-27A (RAB27A), found in Sus scrofa (Pig).